The following is a 258-amino-acid chain: Acyl-[acyl-carrier-protein]--UDP-N-acetylglucosamine O-acyltransferase (258 aa).

It belongs to the transferase hexapeptide repeat family. LpxA subfamily. As to quaternary structure, homotrimer.

The protein localises to the cytoplasm. The enzyme catalyses a (3R)-hydroxyacyl-[ACP] + UDP-N-acetyl-alpha-D-glucosamine = a UDP-3-O-[(3R)-3-hydroxyacyl]-N-acetyl-alpha-D-glucosamine + holo-[ACP]. It functions in the pathway glycolipid biosynthesis; lipid IV(A) biosynthesis; lipid IV(A) from (3R)-3-hydroxytetradecanoyl-[acyl-carrier-protein] and UDP-N-acetyl-alpha-D-glucosamine: step 1/6. Functionally, involved in the biosynthesis of lipid A, a phosphorylated glycolipid that anchors the lipopolysaccharide to the outer membrane of the cell. The protein is Acyl-[acyl-carrier-protein]--UDP-N-acetylglucosamine O-acyltransferase of Saccharophagus degradans (strain 2-40 / ATCC 43961 / DSM 17024).